Consider the following 500-residue polypeptide: MGLLTGDLLGILALAMVIFLLLVDLMHRRSRWAPRYPPGPMPLPGLGNLLQVNFQDPRLSFIQLRRRFGDVFSLQQIWRPVVVLNGLAAVREALVSHSHETSDRPPVFILEHLGYGPRSEGVILARYGKAWREQRRFSVSTLRNFGLGKKSLEEWVTQEASCLCAAFADQAGRPFSPNNLLNKAVSNVIASLTFARRFEYNDPRMLKLLDLVLEGLKEEVGLMRQVLEAMPVLRHIPGLCAKLFPRQKAFLVMIDELITEHKMTRDLAQPPRDLTDAFLDEMKEAKGNPESSFNDENLRLVVAHLFSAGMITTSTTLAWALLLMILHPDVQRRVQQEIDEVIGHVRQPEIKDQALMPFTLAVLHEVQRFGDIVPLGVAHMTSCDIEVQGFLIPKGTTLITNLTSVLKDETVWKKPFRFYPEHFLDAQGRFTKQEAFMPFSAGRRSCLGEPLARMELFLFFTTLLQAFSFSVPTGQPCPSDHGVFAFLLFPSPYQLCAVPR.

Heme is bound at residue Cys446.

This sequence belongs to the cytochrome P450 family. It depends on heme as a cofactor. In terms of tissue distribution, found in liver and kidney.

It localises to the endoplasmic reticulum membrane. The protein resides in the microsome membrane. The catalysed reaction is calciol + reduced [NADPH--hemoprotein reductase] + O2 = calcidiol + oxidized [NADPH--hemoprotein reductase] + H2O + H(+). The enzyme catalyses alfacalcidol + reduced [NADPH--hemoprotein reductase] + O2 = calcitriol + oxidized [NADPH--hemoprotein reductase] + H2O + H(+). It carries out the reaction dodecanoate + reduced [NADPH--hemoprotein reductase] + O2 = 12-hydroxydodecanoate + oxidized [NADPH--hemoprotein reductase] + H2O + H(+). It catalyses the reaction dodecanoate + reduced [NADPH--hemoprotein reductase] + O2 = 11-hydroxydodecanoate + oxidized [NADPH--hemoprotein reductase] + H2O + H(+). The catalysed reaction is 5beta-cholestane-3alpha,7alpha-diol + reduced [NADPH--hemoprotein reductase] + O2 = 5beta-cholestane-3alpha,7alpha,25-triol + oxidized [NADPH--hemoprotein reductase] + H2O + H(+). The enzyme catalyses 5beta-cholestane-3alpha,7alpha,12alpha-triol + reduced [NADPH--hemoprotein reductase] + O2 = 5beta-cholestane-3alpha,7alpha,12alpha,25-tetrol + oxidized [NADPH--hemoprotein reductase] + H2O + H(+). Functionally, catalyzes the 25-hydroxylation of vitamin D(3) (calciol), 1alpha-hydroxyvitamin D(3) (alphacalcidiol) and some C27 steroids. In addition the enzyme catalyzes the hydroxylation of positions 11 and 12 of dodecanoate. In Sus scrofa (Pig), this protein is Vitamin D(3) 25-hydroxylase (CYP2D25).